A 484-amino-acid polypeptide reads, in one-letter code: tRNA nucleotidyltransferase cca2 (484 aa).

The B/A element motif lies at 122–124; sequence RAE. A flexible loop region spans residues 125-142; it reads SYDDKSRIPSVTPGTVET. An ERhxxExxxhh motif motif is present at residues 234–244; it reads ERVGEEIEKML.

The protein belongs to the tRNA nucleotidyltransferase/poly(A) polymerase family.

Its subcellular location is the cytoplasm. It catalyses the reaction a tRNA with a 3' CC end + ATP = a tRNA with a 3' CCA end + diphosphate. TRNA nucleotidyltransferase involved in the synthesis of the tRNA CCA terminus. In contrast to what is usually observed in eukaryotes for which one enzyme synthesizes the whole tRNA CCA terminus, in S.pombe, cca1 specifically adds two cytidine residues to a tRNA substrate lacking this sequence while cca2 specifically adds the terminal adenosine residue thereby completing the CCA sequence. The polypeptide is tRNA nucleotidyltransferase cca2 (Schizosaccharomyces pombe (strain 972 / ATCC 24843) (Fission yeast)).